The sequence spans 123 residues: Small ribosomal subunit protein uS13 (123 aa).

The disordered stretch occupies residues 97 to 123 (PVRGQRTRSNARTRKGPRPSRIKKKGK). Residues 101 to 123 (QRTRSNARTRKGPRPSRIKKKGK) are compositionally biased toward basic residues.

This sequence belongs to the universal ribosomal protein uS13 family. Part of the 30S ribosomal subunit. Forms a loose heterodimer with protein S19. Forms two bridges to the 50S subunit in the 70S ribosome.

In terms of biological role, located at the top of the head of the 30S subunit, it contacts several helices of the 16S rRNA. In the 70S ribosome it contacts the 23S rRNA (bridge B1a) and protein L5 of the 50S subunit (bridge B1b), connecting the 2 subunits; these bridges are implicated in subunit movement. Contacts the tRNAs in the A and P-sites. This chain is Small ribosomal subunit protein uS13, found in Fervidobacterium nodosum (strain ATCC 35602 / DSM 5306 / Rt17-B1).